Here is a 500-residue protein sequence, read N- to C-terminus: Cytochrome P450 2D26 (500 aa).

Position 249 is a phosphoserine (serine 249). Heme is bound at residue cysteine 446.

It belongs to the cytochrome P450 family. It depends on heme as a cofactor.

It localises to the endoplasmic reticulum membrane. The protein localises to the microsome membrane. It catalyses the reaction an organic molecule + reduced [NADPH--hemoprotein reductase] + O2 = an alcohol + oxidized [NADPH--hemoprotein reductase] + H2O + H(+). Cytochromes P450 are a group of heme-thiolate monooxygenases. In liver microsomes, this enzyme is involved in an NADPH-dependent electron transport pathway. It oxidizes a variety of structurally unrelated compounds, including steroids, fatty acids, and xenobiotics. The sequence is that of Cytochrome P450 2D26 from Mus musculus (Mouse).